A 99-amino-acid polypeptide reads, in one-letter code: MTESKRILADVLLRPVITEKATALMEQRKYVFEVLPTATKPLIRAAVEEMFRVRVTSVNTLKPPRKQRRVGRFVGYRTRPKRAIVTLAEGDSITLFPDT.

This sequence belongs to the universal ribosomal protein uL23 family. As to quaternary structure, part of the 50S ribosomal subunit. Contacts protein L29, and trigger factor when it is bound to the ribosome.

Its function is as follows. One of the early assembly proteins it binds 23S rRNA. One of the proteins that surrounds the polypeptide exit tunnel on the outside of the ribosome. Forms the main docking site for trigger factor binding to the ribosome. The protein is Large ribosomal subunit protein uL23 of Synechococcus sp. (strain JA-2-3B'a(2-13)) (Cyanobacteria bacterium Yellowstone B-Prime).